The chain runs to 277 residues: Ribosomal RNA small subunit methyltransferase A (277 aa).

6 residues coordinate S-adenosyl-L-methionine: His20, Leu22, Gly47, Glu71, Asp94, and Asn116.

It belongs to the class I-like SAM-binding methyltransferase superfamily. rRNA adenine N(6)-methyltransferase family. RsmA subfamily.

The protein resides in the cytoplasm. The catalysed reaction is adenosine(1518)/adenosine(1519) in 16S rRNA + 4 S-adenosyl-L-methionine = N(6)-dimethyladenosine(1518)/N(6)-dimethyladenosine(1519) in 16S rRNA + 4 S-adenosyl-L-homocysteine + 4 H(+). Specifically dimethylates two adjacent adenosines (A1518 and A1519) in the loop of a conserved hairpin near the 3'-end of 16S rRNA in the 30S particle. May play a critical role in biogenesis of 30S subunits. The protein is Ribosomal RNA small subunit methyltransferase A of Burkholderia sp.